The primary structure comprises 351 residues: 2-Hydroxyacid oxidase 2 (351 aa).

An FMN hydroxy acid dehydrogenase domain is found at S2–L351. Residues P77 to G79, S106, and Q128 each bind FMN. Y130 lines the a 2-oxocarboxylate pocket. T156 contacts FMN. R165 serves as a coordination point for a 2-oxocarboxylate. Residue T178 is modified to Phosphothreonine. K222 is an FMN binding site. H246 serves as the catalytic Proton acceptor. R249 serves as a coordination point for a 2-oxocarboxylate. Residues D277–R281 and G300–R301 contribute to the FMN site. Residues S349–L351 carry the Microbody targeting signal motif.

It belongs to the FMN-dependent alpha-hydroxy acid dehydrogenase family. In terms of assembly, homotetramer. FMN serves as cofactor. In terms of tissue distribution, expressed in the liver and kidney.

Its subcellular location is the peroxisome. It carries out the reaction a (2S)-2-hydroxycarboxylate + O2 = a 2-oxocarboxylate + H2O2. The enzyme catalyses 2-hydroxyhexadecanoate + O2 = 2-oxohexadecanoate + H2O2. The catalysed reaction is 2-hydroxyoctanoate + O2 = 2-oxooctanoate + H2O2. The protein operates within lipid metabolism; fatty acid metabolism. Its function is as follows. Oxidase that catalyzes the oxidation of medium and long chain hydroxyacids such as 2-hydroxyhexadecanoate and 2-hydroxyoctanoate, to the correspondong 2-oxoacids. Its role in the oxidation of 2-hydroxy fatty acids may contribute to the general pathway of fatty acid alpha-oxidation. Active in vitro with the artificial electron acceptor 2,6-dichlorophenolindophenol (DCIP), but O2 is believed to be the physiological electron acceptor, leading to the production of H2O2. Is not active on glycolate, glyoxylate, L-lactate and 2-hydroxybutanoate. This is 2-Hydroxyacid oxidase 2 (HAO2) from Homo sapiens (Human).